The primary structure comprises 347 residues: Quinolinate synthase (347 aa).

His47 and Ser68 together coordinate iminosuccinate. Residue Cys113 participates in [4Fe-4S] cluster binding. Iminosuccinate-binding positions include 139–141 (YAN) and Ser156. Cys200 contacts [4Fe-4S] cluster. Iminosuccinate-binding positions include 226–228 (HPE) and Thr243. Cys297 provides a ligand contact to [4Fe-4S] cluster.

Belongs to the quinolinate synthase family. Type 1 subfamily. The cofactor is [4Fe-4S] cluster.

The protein resides in the cytoplasm. The catalysed reaction is iminosuccinate + dihydroxyacetone phosphate = quinolinate + phosphate + 2 H2O + H(+). It functions in the pathway cofactor biosynthesis; NAD(+) biosynthesis; quinolinate from iminoaspartate: step 1/1. Functionally, catalyzes the condensation of iminoaspartate with dihydroxyacetone phosphate to form quinolinate. The protein is Quinolinate synthase of Escherichia coli O9:H4 (strain HS).